The primary structure comprises 786 residues: Kazrin-A (786 aa).

The interval 44 to 70 is disordered; that stretch reads EEPGEPQEHQQQQQQQNHQDAPVQRQK. Residues 52–62 are compositionally biased toward low complexity; sequence HQQQQQQQNHQ. Residues 92 to 270 adopt a coiled-coil conformation; the sequence is LLHEEVLRLQ…SLATLTKDVP (179 aa). Positions 350–425 are disordered; it reads MSDASVMEGE…LFDDSDSLSS (76 aa). 3 consecutive SAM domains span residues 457–522, 535–599, and 623–686; these read WRAG…YRDA, DHHW…LHTL, and WTCQ…SEEM. Residues 703-760 are disordered; it reads PLGTPPTLHRQSSLSSSSPSCHDDQQSLRRVKQQLGLSPKNLTARNISHQSRSGSFPR. The span at 742 to 758 shows a compositional bias: polar residues; sequence KNLTARNISHQSRSGSF.

The protein belongs to the kazrin family.

The sequence is that of Kazrin-A (kazna) from Danio rerio (Zebrafish).